The primary structure comprises 162 residues: Probable chemoreceptor glutamine deamidase CheD (162 aa).

This sequence belongs to the CheD family.

It catalyses the reaction L-glutaminyl-[protein] + H2O = L-glutamyl-[protein] + NH4(+). Probably deamidates glutamine residues to glutamate on methyl-accepting chemotaxis receptors (MCPs), playing an important role in chemotaxis. The protein is Probable chemoreceptor glutamine deamidase CheD of Clostridium novyi (strain NT).